A 327-amino-acid chain; its full sequence is MAADQRPLAIAVMGPTASGKTALAIEAAQRWGGEIVSVDSALVYRGLDIGAAKPDAAMRAAVPHHLLDLRDPWQVYSAAEFAADARTAMAQIVARGKIPILAGGTGLYFRAALEGLAQMPEADPAVRLAIAAEAEQVGWGALHAQLARIDPVAAARIHATDRQRIQRALEVYRISGKPISYWQTRPAGPRAPVRVLKLVLAPRQRAVLHARIAMRLDVMLADGFLTEVEQLRALPQMRAVAAPLDLPAVRAVGYRQAWEYLDGAGSLAEFRDKAVQATRQLAKRQLTWLRGELDARWFDPERDRGQLEQAVAGFLGQRRTMQQPSAV.

14 to 21 is a binding site for ATP; sequence GPTASGKT. 16 to 21 provides a ligand contact to substrate; sequence TASGKT. Interaction with substrate tRNA stretches follow at residues 39–42 and 163–167; these read DSAL and QRIQR.

This sequence belongs to the IPP transferase family. Monomer. It depends on Mg(2+) as a cofactor.

It carries out the reaction adenosine(37) in tRNA + dimethylallyl diphosphate = N(6)-dimethylallyladenosine(37) in tRNA + diphosphate. Its function is as follows. Catalyzes the transfer of a dimethylallyl group onto the adenine at position 37 in tRNAs that read codons beginning with uridine, leading to the formation of N6-(dimethylallyl)adenosine (i(6)A). This Xanthomonas campestris pv. campestris (strain 8004) protein is tRNA dimethylallyltransferase.